The following is a 122-amino-acid chain: Small ribosomal subunit protein uS12c (122 aa).

This sequence belongs to the universal ribosomal protein uS12 family. In terms of assembly, part of the 30S ribosomal subunit.

The protein resides in the plastid. The protein localises to the chloroplast. In terms of biological role, with S4 and S5 plays an important role in translational accuracy. Located at the interface of the 30S and 50S subunits. In Illicium oligandrum (Star anise), this protein is Small ribosomal subunit protein uS12c (rps12).